A 377-amino-acid chain; its full sequence is GTP 3',8-cyclase (377 aa).

Positions 1–29 are disordered; sequence MTTRLYLSPTPPRNDREGASKSTSASIKH. Residues 45–271 form the Radical SAM core domain; sequence RFGRIARDLR…FTLSPAKEPR (227 aa). Arg54 lines the GTP pocket. [4Fe-4S] cluster contacts are provided by Cys61 and Cys65. Residue Tyr67 coordinates S-adenosyl-L-methionine. Cys68 is a binding site for [4Fe-4S] cluster. Arg105 provides a ligand contact to GTP. Gly109 serves as a coordination point for S-adenosyl-L-methionine. Thr140 is a GTP binding site. Ser164 contacts S-adenosyl-L-methionine. Lys201 provides a ligand contact to GTP. An S-adenosyl-L-methionine-binding site is contributed by Met235. Cys304 and Cys307 together coordinate [4Fe-4S] cluster. 309 to 311 lines the GTP pocket; it reads RSR. Cys321 is a binding site for [4Fe-4S] cluster.

The protein belongs to the radical SAM superfamily. MoaA family. As to quaternary structure, monomer and homodimer. Requires [4Fe-4S] cluster as cofactor.

The enzyme catalyses GTP + AH2 + S-adenosyl-L-methionine = (8S)-3',8-cyclo-7,8-dihydroguanosine 5'-triphosphate + 5'-deoxyadenosine + L-methionine + A + H(+). It functions in the pathway cofactor biosynthesis; molybdopterin biosynthesis. Catalyzes the cyclization of GTP to (8S)-3',8-cyclo-7,8-dihydroguanosine 5'-triphosphate. In Corynebacterium glutamicum (strain ATCC 13032 / DSM 20300 / JCM 1318 / BCRC 11384 / CCUG 27702 / LMG 3730 / NBRC 12168 / NCIMB 10025 / NRRL B-2784 / 534), this protein is GTP 3',8-cyclase.